The sequence spans 116 residues: Putative iron-sulfur cluster insertion protein ErpA (116 aa).

Cys44, Cys108, and Cys110 together coordinate iron-sulfur cluster.

Belongs to the HesB/IscA family. As to quaternary structure, homodimer. It depends on iron-sulfur cluster as a cofactor.

Functionally, required for insertion of 4Fe-4S clusters. The chain is Putative iron-sulfur cluster insertion protein ErpA from Herminiimonas arsenicoxydans.